Consider the following 974-residue polypeptide: Protein bicaudal C homolog 1 (974 aa).

Residues 1–50 (MAAQGEPGYLAAQSDPGSNSERSTDSPVPGSEDDLVAGATLHSPEWSEER) are disordered. Phosphoserine occurs at positions 26, 31, and 43. 2 consecutive KH domains span residues 132 to 199 (RVTL…RVRI) and 284 to 348 (PVST…RQYL). K398 carries the post-translational modification N6-acetyllysine. Residues S576, S612, and S679 each carry the phosphoserine modification. 3 disordered regions span residues 593–644 (VLSA…GDLK), 665–719 (GTKN…HLAP), and 783–846 (YKPT…KSTE). A compositionally biased stretch (polar residues) spans 602–619 (SIQTSGSEQTSPKSSPTE). Positions 690-703 (LADKKAPGSERAAE) are enriched in basic and acidic residues. One can recognise an SAM domain in the interval 873-936 (FKGSDLPELF…LLAISELNKN (64 aa)).

The protein belongs to the BicC family. In terms of assembly, interacts (via KH domains) with ANKS6 (via SAM domain) in an RNA-dependent manner. Interacts with ANKS3.

The protein localises to the cytoplasm. Functionally, putative RNA-binding protein. Acts as a negative regulator of Wnt signaling. May be involved in regulating gene expression during embryonic development. The chain is Protein bicaudal C homolog 1 (BICC1) from Homo sapiens (Human).